A 106-amino-acid chain; its full sequence is uncharacterized protein (106 aa).

The next 2 membrane-spanning stretches (helical) occupy residues 10 to 30 (VYIQ…VAFV) and 65 to 85 (LDFA…LLAY).

It localises to the membrane. This is an uncharacterized protein from Saccharomyces cerevisiae (strain ATCC 204508 / S288c) (Baker's yeast).